We begin with the raw amino-acid sequence, 111 residues long: ATP-dependent Clp protease adapter protein ClpS (111 aa).

Belongs to the ClpS family. Binds to the N-terminal domain of the chaperone ClpA.

Involved in the modulation of the specificity of the ClpAP-mediated ATP-dependent protein degradation. This chain is ATP-dependent Clp protease adapter protein ClpS, found in Legionella pneumophila (strain Paris).